The sequence spans 517 residues: Cytochrome P450 monooxygenase 124 (517 aa).

Residues 3–23 form a helical membrane-spanning segment; sequence SLLVLFVSLLALGALKKHLDF. Cysteine 453 lines the heme pocket.

This sequence belongs to the cytochrome P450 family. Requires heme as cofactor.

It localises to the membrane. It participates in secondary metabolite biosynthesis. Its function is as follows. Cytochrome P450 monooxygenase that is able to use trans-stilbene as a substrate for oxidation. In Postia placenta (strain ATCC 44394 / Madison 698-R) (Brown rot fungus), this protein is Cytochrome P450 monooxygenase 124.